Here is a 372-residue protein sequence, read N- to C-terminus: N-methyl-L-tryptophan oxidase (372 aa).

Residue 4–34 (DLIIIGSGSVGAAAGYYATRAGLNVLMTDAH) coordinates FAD. C308 carries the S-8alpha-FAD cysteine modification.

This sequence belongs to the MSOX/MTOX family. MTOX subfamily. As to quaternary structure, monomer. Requires FAD as cofactor.

It catalyses the reaction N(alpha)-methyl-L-tryptophan + O2 + H2O = L-tryptophan + formaldehyde + H2O2. Functionally, catalyzes the oxidative demethylation of N-methyl-L-tryptophan. The polypeptide is N-methyl-L-tryptophan oxidase (Escherichia coli O81 (strain ED1a)).